The chain runs to 372 residues: 3-isopropylmalate dehydrogenase (372 aa).

NAD(+) is bound at residue 79-90 (GPKWQGGAVRPE). Residues Arg-97, Arg-107, Arg-136, and Asp-225 each coordinate substrate. Residues Asp-225, Asp-250, and Asp-254 each coordinate Mg(2+). 289–300 (GSAPDLPAGKAN) is an NAD(+) binding site.

The protein belongs to the isocitrate and isopropylmalate dehydrogenases family. As to quaternary structure, homodimer. Mg(2+) is required as a cofactor. Mn(2+) serves as cofactor.

Its subcellular location is the cytoplasm. It catalyses the reaction (2R,3S)-3-isopropylmalate + NAD(+) = 4-methyl-2-oxopentanoate + CO2 + NADH. It functions in the pathway amino-acid biosynthesis; L-leucine biosynthesis; L-leucine from 3-methyl-2-oxobutanoate: step 3/4. Catalyzes the oxidation of 3-carboxy-2-hydroxy-4-methylpentanoate (3-isopropylmalate) to 3-carboxy-4-methyl-2-oxopentanoate. The product decarboxylates to 4-methyl-2 oxopentanoate. In Eremothecium gossypii (strain ATCC 10895 / CBS 109.51 / FGSC 9923 / NRRL Y-1056) (Yeast), this protein is 3-isopropylmalate dehydrogenase (LEU2).